Reading from the N-terminus, the 551-residue chain is Rqc2 homolog RqcH (551 aa).

The segment at 363-551 (YQKLKEAVKY…SKKIASMKKS (189 aa)) is required for fibronectin binding.

This sequence belongs to the NEMF family. As to quaternary structure, associates with stalled 50S ribosomal subunits, binds to RqcP. Interacts with human fibronectin.

It is found in the cell surface. It localises to the cytoplasm. Key component of the ribosome quality control system (RQC), a ribosome-associated complex that mediates the extraction of incompletely synthesized nascent chains from stalled ribosomes and their subsequent degradation. RqcH recruits Ala-charged tRNA, and with RqcP directs the elongation of stalled nascent chains on 50S ribosomal subunits, leading to non-templated C-terminal alanine extensions (Ala tail). The Ala tail promotes nascent chain degradation. May add between 1 and at least 8 Ala residues. Binds to stalled 50S ribosomal subunits. Functionally, recombinant protein binds to immobilized human fibronectin; binding is saturable and competed by heparin. Recombinant protein inhibits binding of whole cells to fibronectin. This is Rqc2 homolog RqcH from Streptococcus pneumoniae (strain ATCC BAA-255 / R6).